The primary structure comprises 521 residues: Tetratricopeptide repeat and J domain-containing co-chaperone DNJ1 (521 aa).

An N-terminal signal peptide occupies residues 1–21 (MHLNLAGLAVAATAFLATASA). TPR repeat units lie at residues 33-66 (VSNLLTKAQTHLSRGETNEALVYYDAAIARDPTN), 67-100 (YLSLFKRATAYLSLGRTSQATEDFNKVLSLKPGF), 102-134 (GAHLQLARLRAKAGDWDAAKAQYGLAGKAPKSA), 176-209 (PHLRELRAHCRFELGDVELALSDLQHVLHMKPGD), 211-244 (SPHIVISATSFYALGDLENGIGQVKKCLQSDPDS), 315-348 (LENLIEMTCQAYTESSHKEAAKYCDESLQLNPDS), and 349-382 (FWGLLHKGKAQLKSELYDAAIATLEKAAEIRPDQ). One can recognise a J domain in the interval 404–473 (DYYKVLGVEN…ELRARFDRGD (70 aa)). Positions 464–474 (ELRARFDRGDD) are enriched in basic and acidic residues. Residues 464–521 (ELRARFDRGDDPNSQERPNPFQGQGNPFGGGHPFMFQQGGGGGGPNIKFQFGGQPFGF) are disordered. Positions 489–508 (NPFGGGHPFMFQQGGGGGGP) are enriched in gly residues. The span at 509-521 (NIKFQFGGQPFGF) shows a compositional bias: low complexity.

The protein localises to the endoplasmic reticulum lumen. Endoplasmic reticulum co-chaperone required for the of virulence factors such as PG1, the major endopolygalacturonase produced during the infection of tomato plants. The protein is Tetratricopeptide repeat and J domain-containing co-chaperone DNJ1 of Fusarium oxysporum f. sp. lycopersici (strain 4287 / CBS 123668 / FGSC 9935 / NRRL 34936) (Fusarium vascular wilt of tomato).